The primary structure comprises 324 residues: Phospho-N-acetylmuramoyl-pentapeptide-transferase (324 aa).

A run of 10 helical transmembrane segments spans residues 9 to 29, 53 to 73, 77 to 97, 117 to 137, 147 to 167, 176 to 196, 201 to 221, 227 to 247, 253 to 273, and 304 to 324; these read TFAV…PFLV, TMGA…FSFI, VSAA…LGFL, FLGQ…NDFA, IEVD…VGFS, LDGL…VIAF, MDVA…LLFN, IFMG…ISIL, LLLL…LQVF, and VLTF…VVIF.

It belongs to the glycosyltransferase 4 family. MraY subfamily. Requires Mg(2+) as cofactor.

The protein localises to the cell membrane. The enzyme catalyses UDP-N-acetyl-alpha-D-muramoyl-L-alanyl-gamma-D-glutamyl-meso-2,6-diaminopimeloyl-D-alanyl-D-alanine + di-trans,octa-cis-undecaprenyl phosphate = di-trans,octa-cis-undecaprenyl diphospho-N-acetyl-alpha-D-muramoyl-L-alanyl-D-glutamyl-meso-2,6-diaminopimeloyl-D-alanyl-D-alanine + UMP. The protein operates within cell wall biogenesis; peptidoglycan biosynthesis. In terms of biological role, catalyzes the initial step of the lipid cycle reactions in the biosynthesis of the cell wall peptidoglycan: transfers peptidoglycan precursor phospho-MurNAc-pentapeptide from UDP-MurNAc-pentapeptide onto the lipid carrier undecaprenyl phosphate, yielding undecaprenyl-pyrophosphoryl-MurNAc-pentapeptide, known as lipid I. This Listeria monocytogenes serovar 1/2a (strain ATCC BAA-679 / EGD-e) protein is Phospho-N-acetylmuramoyl-pentapeptide-transferase.